Here is a 304-residue protein sequence, read N- to C-terminus: MDSLTNLATTEGRNPASEELDQLPTLDVLRLMNDEDHRVPDAIASQLPAIAAVVEAAVKGLSAGGRLIYAGAGTSGRLGVLDAAECPPTFSTNPTMVVGLIAGGQQAMFQAVEGAEDDADRGAEELNVLQPGPHDVVVGLAASGRTPWVVGVVRAAKRAGAVTASVCCNHRAVISSEVDLPVEIDAGPEVLTGSTRLKAGTVQKLVLNMISTATMVGLGKTYGNLMVDVSPSNEKLRQRAMSIVMAATGCSCDDAITALHEAGGHAKTAIVMVLLGMTATQARARLAEVGGVVRVAVDENHLRL.

In terms of domain architecture, SIS spans 57–220 (AVKGLSAGGR…STATMVGLGK (164 aa)). The active-site Proton donor is the Glu-85. Glu-116 is a catalytic residue.

It belongs to the GCKR-like family. MurNAc-6-P etherase subfamily. In terms of assembly, homodimer.

The enzyme catalyses N-acetyl-D-muramate 6-phosphate + H2O = N-acetyl-D-glucosamine 6-phosphate + (R)-lactate. The protein operates within amino-sugar metabolism; N-acetylmuramate degradation. Specifically catalyzes the cleavage of the D-lactyl ether substituent of MurNAc 6-phosphate, producing GlcNAc 6-phosphate and D-lactate. This is N-acetylmuramic acid 6-phosphate etherase from Cutibacterium acnes (strain DSM 16379 / KPA171202) (Propionibacterium acnes).